We begin with the raw amino-acid sequence, 269 residues long: 3-methyl-2-oxobutanoate hydroxymethyltransferase (269 aa).

2 residues coordinate Mg(2+): Asp52 and Asp91. 3-methyl-2-oxobutanoate is bound by residues 52–53 (DT), Asp91, and Lys121. Glu123 lines the Mg(2+) pocket. The active-site Proton acceptor is Glu186.

It belongs to the PanB family. In terms of assembly, homodecamer; pentamer of dimers. The cofactor is Mg(2+).

The protein resides in the cytoplasm. The enzyme catalyses 3-methyl-2-oxobutanoate + (6R)-5,10-methylene-5,6,7,8-tetrahydrofolate + H2O = 2-dehydropantoate + (6S)-5,6,7,8-tetrahydrofolate. It participates in cofactor biosynthesis; (R)-pantothenate biosynthesis; (R)-pantoate from 3-methyl-2-oxobutanoate: step 1/2. In terms of biological role, catalyzes the reversible reaction in which hydroxymethyl group from 5,10-methylenetetrahydrofolate is transferred onto alpha-ketoisovalerate to form ketopantoate. The sequence is that of 3-methyl-2-oxobutanoate hydroxymethyltransferase from Rhodopirellula baltica (strain DSM 10527 / NCIMB 13988 / SH1).